We begin with the raw amino-acid sequence, 87 residues long: uncharacterized protein (87 aa).

The interval 67 to 87 is disordered; it reads TGGDPREAVVRPADQVEGYTG.

This is an uncharacterized protein from Mycobacterium bovis (strain ATCC BAA-935 / AF2122/97).